A 190-amino-acid polypeptide reads, in one-letter code: MAEKTQKSVKIAPGAVVCVESEIRGDVTIGPRTVIHPKARIIAEAGPIVIGEGNLIEEQALIINAHPDNITPDAEDPEPKPMIIGTNNVFEVGCYCQAMKIGDNNVIESKAYVGRNVILTSGCIIGACCNLNTFEVIPENTVIYGGDCLRRVQTERPQPQTLQLDFLMKILPNYHHLKKTMKGSSTPVKN.

Residue Thr186 is modified to Phosphothreonine; by CDK1.

This sequence belongs to the dynactin subunits 5/6 family. Dynactin subunit 6 subfamily. As to quaternary structure, subunit of dynactin, a multiprotein complex part of a tripartite complex with dynein and a adapter, such as BICDL1, BICD2 or HOOK3. The dynactin complex is built around ACTR1A/ACTB filament and consists of an actin-related filament composed of a shoulder domain, a pointed end and a barbed end. Its length is defined by its flexible shoulder domain. The soulder is composed of 2 DCTN1 subunits, 4 DCTN2 and 2 DCTN3. The 4 DCNT2 (via N-terminus) bind the ACTR1A filament and act as molecular rulers to determine the length. The pointed end is important for binding dynein-dynactin cargo adapters. Consists of 4 subunits: ACTR10, DCNT4, DCTN5 and DCTN6. Within the complex DCTN6 forms a heterodimer with DCTN5. The barbed end is composed of a CAPZA1:CAPZB heterodimers, which binds ACTR1A/ACTB filament and dynactin and stabilizes dynactin. Interacts with PLK1. Interacts with N4BP2L1. In terms of processing, phosphorylation at Thr-186 by CDK1 during mitotic prometaphase creates a binding site for PLK1 that facilitates its recruitment to kinetochores.

It localises to the cytoplasm. The protein localises to the cytoskeleton. It is found in the chromosome. The protein resides in the centromere. Its subcellular location is the kinetochore. Its function is as follows. Part of the dynactin complex that activates the molecular motor dynein for ultra-processive transport along microtubules. The protein is Dynactin subunit 6 (DCTN6) of Bos taurus (Bovine).